Consider the following 187-residue polypeptide: MNAMGSDYIREVNVVKSARVGYSKMLLGVYAYFIEHKQRNTLIPAGFVAVFNSDESSWHLVEDHRGKTVYDVASGDALFISELGPLPENVTWLSPEGEFQKWNGTAWVKDAEAEKLFRIREAEETKNSLMQVASEHIAPLQDAVDLEIATEEETSLLEAWKKYRVLLNRVDTSTAPDIEWPTNPVRE.

In the C-terminal section; belongs to the tfa family.

In Escherichia coli (strain K12), this protein is Protein TfaD (tfaD).